We begin with the raw amino-acid sequence, 366 residues long: MTPEHLPTEQYEAQLAEKVVRLQSMMAPFSNLVPEVFRSPVSHYRMRAEFRIWHDGDDLYHIIFDQQTKSRIRVDSFPAASELINQLMSAMIAGVRNNPVLRHKLFQIDYLTTLSNQAVVSLLYHKKLNDEWRQQAEALRDALRAQNLNVHLIGRATKTKIELDQDYIDERLPVAGKEMIYRQVENSFTQPNAAMNIQMLEWALDVTKGSKGDLLELYCGNGNFSLALARNFDRVLATEIAKPSVAAAQYNIAANHIDNVQIIRMAAEEFTQAMNGVREFHRLQGIDLKSYQCETIFVDPPRSGLDSETEKMVQAYPRILYISCNPETLCKNLETLSQTHKVERLALFDQFPYTHHMECGVLLTAK.

Residues Gln-190, Tyr-218, Asn-223, Glu-239, and Asp-299 each coordinate S-adenosyl-L-methionine. Cys-324 (nucleophile) is an active-site residue. The active-site Proton acceptor is Glu-358.

It belongs to the class I-like SAM-binding methyltransferase superfamily. RNA M5U methyltransferase family. TrmA subfamily.

The enzyme catalyses uridine(54) in tRNA + S-adenosyl-L-methionine = 5-methyluridine(54) in tRNA + S-adenosyl-L-homocysteine + H(+). It catalyses the reaction uridine(341) in tmRNA + S-adenosyl-L-methionine = 5-methyluridine(341) in tmRNA + S-adenosyl-L-homocysteine + H(+). Functionally, dual-specificity methyltransferase that catalyzes the formation of 5-methyluridine at position 54 (m5U54) in all tRNAs, and that of position 341 (m5U341) in tmRNA (transfer-mRNA). This Escherichia coli O7:K1 (strain IAI39 / ExPEC) protein is tRNA/tmRNA (uracil-C(5))-methyltransferase.